Here is a 361-residue protein sequence, read N- to C-terminus: tRNA-specific 2-thiouridylase MnmA (361 aa).

ATP is bound by residues 11–18 (GMSGGVDS) and Met-37. The segment at 97-99 (NPD) is interaction with target base in tRNA. Catalysis depends on Cys-102, which acts as the Nucleophile. An intrachain disulfide couples Cys-102 to Cys-199. Position 126 (Gly-126) interacts with ATP. Residues 149 to 151 (KDQ) form an interaction with tRNA region. Residue Cys-199 is the Cysteine persulfide intermediate of the active site. Positions 311-312 (RY) are interaction with tRNA.

Belongs to the MnmA/TRMU family.

The protein resides in the cytoplasm. It catalyses the reaction S-sulfanyl-L-cysteinyl-[protein] + uridine(34) in tRNA + AH2 + ATP = 2-thiouridine(34) in tRNA + L-cysteinyl-[protein] + A + AMP + diphosphate + H(+). In terms of biological role, catalyzes the 2-thiolation of uridine at the wobble position (U34) of tRNA, leading to the formation of s(2)U34. The polypeptide is tRNA-specific 2-thiouridylase MnmA (Cupriavidus necator (strain ATCC 17699 / DSM 428 / KCTC 22496 / NCIMB 10442 / H16 / Stanier 337) (Ralstonia eutropha)).